Here is a 446-residue protein sequence, read N- to C-terminus: Dihydroorotate dehydrogenase (quinone), mitochondrial (446 aa).

A mitochondrion-targeting transit peptide spans 1–13 (MHSRPLPTLGRHA). The chain crosses the membrane as a helical span at residues 40–57 (AILYTAGILGGAFAGYYL). Residues 125-129 (AGLDK) and serine 149 contribute to the FMN site. Lysine 129 contributes to the substrate binding site. 174-178 (NRYGF) is a substrate binding site. Residues asparagine 222 and asparagine 252 each coordinate FMN. Substrate-binding positions include asparagine 252 and 252–257 (NVSSPN). Serine 255 acts as the Nucleophile in catalysis. Lysine 303 and serine 331 together coordinate FMN. 332–333 (NT) serves as a coordination point for substrate. FMN is bound by residues glycine 357, glycine 387, and 408–409 (YT).

Belongs to the dihydroorotate dehydrogenase family. Type 2 subfamily. FMN serves as cofactor.

It localises to the mitochondrion inner membrane. It carries out the reaction (S)-dihydroorotate + a quinone = orotate + a quinol. Its pathway is pyrimidine metabolism; UMP biosynthesis via de novo pathway; orotate from (S)-dihydroorotate (quinone route): step 1/1. With respect to regulation, the activity is dependent of the presence of oxygen. In terms of biological role, catalyzes the conversion of dihydroorotate to orotate with quinone as electron acceptor. In Lachancea kluyveri (strain ATCC 58438 / CBS 3082 / BCRC 21498 / NBRC 1685 / JCM 7257 / NCYC 543 / NRRL Y-12651) (Yeast), this protein is Dihydroorotate dehydrogenase (quinone), mitochondrial (URA9).